A 664-amino-acid chain; its full sequence is UvrABC system protein B (664 aa).

The region spanning 25–170 (NSILLGNKYQ…FVGQRISIKE (146 aa)) is the Helicase ATP-binding domain. 38–45 (GVTGSGKT) is a binding site for ATP. The Beta-hairpin motif lies at 91–114 (YYDYYQPESYVPSKDLFIEKEATI). The 167-residue stretch at 429–595 (QMEDLYIEIQ…TIVKKIQNIL (167 aa)) folds into the Helicase C-terminal domain. The UVR domain maps to 622-657 (KKLIDKLKFELEEAVNDERFEDAIVLRDKIKELGSK).

It belongs to the UvrB family. As to quaternary structure, forms a heterotetramer with UvrA during the search for lesions. Interacts with UvrC in an incision complex.

It localises to the cytoplasm. The UvrABC repair system catalyzes the recognition and processing of DNA lesions. A damage recognition complex composed of 2 UvrA and 2 UvrB subunits scans DNA for abnormalities. Upon binding of the UvrA(2)B(2) complex to a putative damaged site, the DNA wraps around one UvrB monomer. DNA wrap is dependent on ATP binding by UvrB and probably causes local melting of the DNA helix, facilitating insertion of UvrB beta-hairpin between the DNA strands. Then UvrB probes one DNA strand for the presence of a lesion. If a lesion is found the UvrA subunits dissociate and the UvrB-DNA preincision complex is formed. This complex is subsequently bound by UvrC and the second UvrB is released. If no lesion is found, the DNA wraps around the other UvrB subunit that will check the other stand for damage. This chain is UvrABC system protein B, found in Borreliella afzelii (strain PKo) (Borrelia afzelii).